Here is a 263-residue protein sequence, read N- to C-terminus: uncharacterized protein (263 aa).

The segment at 198–224 (KRSSDSFVSLKPGEDEHSPLEISTCGN) is disordered.

This is an uncharacterized protein from Saccharomyces cerevisiae (strain ATCC 204508 / S288c) (Baker's yeast).